Consider the following 393-residue polypeptide: Pyrimidine monooxygenase RutA (393 aa).

Residues 79-80 (IK), Asn-145, Glu-154, 170-171 (RY), and Ser-220 each bind FMN.

The protein belongs to the NtaA/SnaA/DszA monooxygenase family. RutA subfamily.

It carries out the reaction uracil + FMNH2 + NADH + O2 = (Z)-3-ureidoacrylate + FMN + NAD(+) + H2O + H(+). The catalysed reaction is thymine + FMNH2 + NADH + O2 = (Z)-2-methylureidoacrylate + FMN + NAD(+) + H2O + H(+). Its function is as follows. Catalyzes the pyrimidine ring opening between N-3 and C-4 by an unusual flavin hydroperoxide-catalyzed mechanism, adding oxygen atoms in the process to yield ureidoacrylate peracid, that immediately reacts with FMN forming ureidoacrylate and FMN-N(5)-oxide. The FMN-N(5)-oxide reacts spontaneously with NADH to produce FMN. Requires the flavin reductase RutF to regenerate FMN in vivo. The chain is Pyrimidine monooxygenase RutA from Escherichia coli O18:K1:H7 (strain IHE3034 / ExPEC).